Here is a 66-residue protein sequence, read N- to C-terminus: Putative inactive (E)-beta-ocimene synthase, chloroplastic (66 aa).

The N-terminal 25 residues, 1 to 25 (MAAHNLCFNSAFVCNVHHQKTQHFP), are a transit peptide targeting the chloroplast.

Belongs to the terpene synthase family. Tpsb subfamily. In terms of tissue distribution, expressed exclusively in flowers.

Its subcellular location is the plastid. The protein localises to the chloroplast. The protein is Putative inactive (E)-beta-ocimene synthase, chloroplastic (TPS02) of Arabidopsis thaliana (Mouse-ear cress).